We begin with the raw amino-acid sequence, 185 residues long: Elongation factor P (185 aa).

The protein belongs to the elongation factor P family.

Its subcellular location is the cytoplasm. Its pathway is protein biosynthesis; polypeptide chain elongation. Involved in peptide bond synthesis. Stimulates efficient translation and peptide-bond synthesis on native or reconstituted 70S ribosomes in vitro. Probably functions indirectly by altering the affinity of the ribosome for aminoacyl-tRNA, thus increasing their reactivity as acceptors for peptidyl transferase. In Synechococcus sp. (strain JA-3-3Ab) (Cyanobacteria bacterium Yellowstone A-Prime), this protein is Elongation factor P.